A 418-amino-acid chain; its full sequence is Adenosylhomocysteinase (418 aa).

3 residues coordinate substrate: Thr-53, Asp-125, and Glu-150. 151–153 is an NAD(+) binding site; that stretch reads TTT. Substrate is bound by residues Lys-180 and Asp-184. Residues Asn-185, 214–219, Glu-237, Asn-272, 293–295, and Asn-340 each bind NAD(+); these read GYGWCG and SGH.

It belongs to the adenosylhomocysteinase family. NAD(+) serves as cofactor.

The protein resides in the cytoplasm. It carries out the reaction S-adenosyl-L-homocysteine + H2O = L-homocysteine + adenosine. Its pathway is amino-acid biosynthesis; L-homocysteine biosynthesis; L-homocysteine from S-adenosyl-L-homocysteine: step 1/1. May play a key role in the regulation of the intracellular concentration of adenosylhomocysteine. The sequence is that of Adenosylhomocysteinase from Aquifex aeolicus (strain VF5).